A 693-amino-acid chain; its full sequence is DNA ligase (693 aa).

Residues 35 to 39, 84 to 85, and Glu-121 each bind NAD(+); these read DAEYD and SI. Residue Lys-123 is the N6-AMP-lysine intermediate of the active site. Residues Arg-144, Glu-180, Lys-297, and Lys-321 each coordinate NAD(+). The Zn(2+) site is built by Cys-418, Cys-421, Cys-436, and Cys-442. The BRCT domain occupies 601–690; sequence PASGSVAGLT…EQSPINNKDG (90 aa).

Belongs to the NAD-dependent DNA ligase family. LigA subfamily. Mg(2+) is required as a cofactor. Requires Mn(2+) as cofactor.

It catalyses the reaction NAD(+) + (deoxyribonucleotide)n-3'-hydroxyl + 5'-phospho-(deoxyribonucleotide)m = (deoxyribonucleotide)n+m + AMP + beta-nicotinamide D-nucleotide.. DNA ligase that catalyzes the formation of phosphodiester linkages between 5'-phosphoryl and 3'-hydroxyl groups in double-stranded DNA using NAD as a coenzyme and as the energy source for the reaction. It is essential for DNA replication and repair of damaged DNA. The sequence is that of DNA ligase from Azoarcus sp. (strain BH72).